The chain runs to 448 residues: NADP-specific glutamate dehydrogenase (448 aa).

Positions 88, 109, and 112 each coordinate substrate. Lys-124 acts as the Proton donor in catalysis. Gly-163 provides a ligand contact to substrate. NADP(+) contacts are provided by Thr-207 and Asn-238. Ser-381 contacts substrate.

It belongs to the Glu/Leu/Phe/Val dehydrogenases family. In terms of assembly, homohexamer.

It carries out the reaction L-glutamate + NADP(+) + H2O = 2-oxoglutarate + NH4(+) + NADPH + H(+). Its function is as follows. Catalyzes the reversible oxidative deamination of glutamate to alpha-ketoglutarate and ammonia. The sequence is that of NADP-specific glutamate dehydrogenase (gdhA) from Helicobacter pylori (strain ATCC 700392 / 26695) (Campylobacter pylori).